The primary structure comprises 664 residues: uncharacterized protein (664 aa).

A signal peptide spans 1 to 35 (MGVSVLTFHVSLFLKRILSIAFFLLSLSTLLRIVN). N-linked (GlcNAc...) asparagine glycans are attached at residues Asn101 and Asn138. Sel1-like repeat units lie at residues 141 to 178 (AFAN…KQGS) and 179 to 214 (LDAH…DHLF). Asn221, Asn300, and Asn371 each carry an N-linked (GlcNAc...) asparagine glycan. 4 Sel1-like repeats span residues 337–372 (AQSC…TKND), 373–409 (SNSY…MNEN), 410–441 (PHAL…TQKS), and 442–477 (VISY…EAIR). 2 N-linked (GlcNAc...) asparagine glycosylation sites follow: Asn454 and Asn537. 2 Sel1-like repeats span residues 564-599 (IDAI…EQSS) and 601-636 (GMGL…SNQN).

It belongs to the sel-1 family.

This is an uncharacterized protein from Schizosaccharomyces pombe (strain 972 / ATCC 24843) (Fission yeast).